The following is a 256-amino-acid chain: Trypsin, alkaline A (256 aa).

A signal peptide spans 1 to 17; the sequence is MRLFLALLALGFAAVAA. Positions 18–24 are cleaved as a propeptide — activation peptide; sequence VPAYPQR. Residues 25 to 256 form the Peptidase S1 domain; that stretch reads IVGGSTTTIQ…RFANWIRNNS (232 aa). An intrachain disulfide couples C55 to C71. Catalysis depends on charge relay system residues H70 and D115. Cystine bridges form between C180-C197 and C209-C233. S213 acts as the Charge relay system in catalysis.

This sequence belongs to the peptidase S1 family. In terms of tissue distribution, midgut.

The protein localises to the secreted. It is found in the extracellular space. The catalysed reaction is Preferential cleavage: Arg-|-Xaa, Lys-|-Xaa.. The chain is Trypsin, alkaline A from Manduca sexta (Tobacco hawkmoth).